The chain runs to 75 residues: Salivary glue protein Sgs-8 (75 aa).

A signal peptide spans 1–24; the sequence is MKLLVVAVIACIMLIGFADPASGC.

In Drosophila melanogaster (Fruit fly), this protein is Salivary glue protein Sgs-8 (Sgs8).